Here is a 318-residue protein sequence, read N- to C-terminus: Ribosomal RNA small subunit methyltransferase H (318 aa).

Residues 42 to 44, D62, F86, D108, and Q115 each bind S-adenosyl-L-methionine; that span reads GGH.

This sequence belongs to the methyltransferase superfamily. RsmH family.

It is found in the cytoplasm. It catalyses the reaction cytidine(1402) in 16S rRNA + S-adenosyl-L-methionine = N(4)-methylcytidine(1402) in 16S rRNA + S-adenosyl-L-homocysteine + H(+). Functionally, specifically methylates the N4 position of cytidine in position 1402 (C1402) of 16S rRNA. The sequence is that of Ribosomal RNA small subunit methyltransferase H from Yersinia pestis (strain Pestoides F).